We begin with the raw amino-acid sequence, 355 residues long: Erythronate-4-phosphate dehydrogenase (355 aa).

Residues Ser-45 and Thr-66 each contribute to the substrate site. An NAD(+)-binding site is contributed by Asp-146. Arg-206 is an active-site residue. Residue Asp-229 coordinates NAD(+). Residue Glu-234 is part of the active site. His-251 (proton donor) is an active-site residue. Gly-254 is a binding site for NAD(+). Tyr-255 serves as a coordination point for substrate.

Belongs to the D-isomer specific 2-hydroxyacid dehydrogenase family. PdxB subfamily. As to quaternary structure, homodimer.

It is found in the cytoplasm. The catalysed reaction is 4-phospho-D-erythronate + NAD(+) = (R)-3-hydroxy-2-oxo-4-phosphooxybutanoate + NADH + H(+). Its pathway is cofactor biosynthesis; pyridoxine 5'-phosphate biosynthesis; pyridoxine 5'-phosphate from D-erythrose 4-phosphate: step 2/5. In terms of biological role, catalyzes the oxidation of erythronate-4-phosphate to 3-hydroxy-2-oxo-4-phosphonooxybutanoate. The chain is Erythronate-4-phosphate dehydrogenase from Acinetobacter baumannii (strain SDF).